The following is a 147-amino-acid chain: 3-dehydroquinate dehydratase (147 aa).

Tyr-25 serves as the catalytic Proton acceptor. Residues Asn-76, His-82, and Asp-89 each contribute to the substrate site. The active-site Proton donor is the His-102. Substrate is bound by residues 103-104 and Arg-113; that span reads IS.

This sequence belongs to the type-II 3-dehydroquinase family. Homododecamer.

The enzyme catalyses 3-dehydroquinate = 3-dehydroshikimate + H2O. It participates in metabolic intermediate biosynthesis; chorismate biosynthesis; chorismate from D-erythrose 4-phosphate and phosphoenolpyruvate: step 3/7. Its function is as follows. Catalyzes a trans-dehydration via an enolate intermediate. The polypeptide is 3-dehydroquinate dehydratase (Mycobacterium tuberculosis (strain ATCC 25177 / H37Ra)).